We begin with the raw amino-acid sequence, 258 residues long: Trans-aconitate 2-methyltransferase (258 aa).

It belongs to the methyltransferase superfamily. Tam family.

The protein localises to the cytoplasm. It catalyses the reaction trans-aconitate + S-adenosyl-L-methionine = (E)-3-(methoxycarbonyl)pent-2-enedioate + S-adenosyl-L-homocysteine. In terms of biological role, catalyzes the S-adenosylmethionine monomethyl esterification of trans-aconitate. This Deinococcus radiodurans (strain ATCC 13939 / DSM 20539 / JCM 16871 / CCUG 27074 / LMG 4051 / NBRC 15346 / NCIMB 9279 / VKM B-1422 / R1) protein is Trans-aconitate 2-methyltransferase.